A 485-amino-acid polypeptide reads, in one-letter code: Glutamyl-tRNA(Gln) amidotransferase subunit A (485 aa).

Catalysis depends on charge relay system residues Lys-79 and Ser-154. The active-site Acyl-ester intermediate is Ser-178.

It belongs to the amidase family. GatA subfamily. In terms of assembly, heterotrimer of A, B and C subunits.

It catalyses the reaction L-glutamyl-tRNA(Gln) + L-glutamine + ATP + H2O = L-glutaminyl-tRNA(Gln) + L-glutamate + ADP + phosphate + H(+). In terms of biological role, allows the formation of correctly charged Gln-tRNA(Gln) through the transamidation of misacylated Glu-tRNA(Gln) in organisms which lack glutaminyl-tRNA synthetase. The reaction takes place in the presence of glutamine and ATP through an activated gamma-phospho-Glu-tRNA(Gln). In Bacillus pumilus (strain SAFR-032), this protein is Glutamyl-tRNA(Gln) amidotransferase subunit A.